Here is a 248-residue protein sequence, read N- to C-terminus: Pulmonary surfactant-associated protein A2 (248 aa).

A signal peptide spans 1–20 (MWLCPLALTLILMAASGAAC). One can recognise a Collagen-like domain in the interval 28–100 (GSPGIPGTPG…AGERGPPGLP (73 aa)). 9 positions are modified to 4-hydroxyproline: proline 30, proline 33, proline 36, proline 42, proline 54, proline 57, proline 63, proline 67, and proline 70. Residues 33–101 (PGTPGSHGLP…GERGPPGLPA (69 aa)) are disordered. Over residues 42 to 51 (PGRDGRDGVK) the composition is skewed to basic and acidic residues. Over residues 54 to 70 (PGPPGPMGPPGETPCPP) the composition is skewed to pro residues. Low complexity predominate over residues 71–82 (GNNGLPGAPGVP). Residues 84–93 (ERGEKGEAGE) are compositionally biased toward basic and acidic residues. A C-type lectin domain is found at 132–248 (MTVGEKVFSS…LYSRLTICEF (117 aa)). Intrachain disulfides connect cysteine 155–cysteine 246 and cysteine 224–cysteine 238. Asparagine 207 is a glycosylation site (N-linked (GlcNAc...) asparagine).

Belongs to the SFTPA family. Oligomeric complex of 6 set of homotrimers. Post-translationally, N-acetylated.

It is found in the secreted. The protein localises to the extracellular space. Its subcellular location is the extracellular matrix. It localises to the surface film. Its function is as follows. In presence of calcium ions, it binds to surfactant phospholipids and contributes to lower the surface tension at the air-liquid interface in the alveoli of the mammalian lung and is essential for normal respiration. The chain is Pulmonary surfactant-associated protein A2 (SFTPA2) from Homo sapiens (Human).